A 150-amino-acid polypeptide reads, in one-letter code: UPF0208 membrane protein VS_0999 (150 aa).

2 helical membrane-spanning segments follow: residues 42 to 62 (FGVKVMPAIAAISVLTQMVFN) and 70 to 90 (AVVMALFAISLPLQGMWWLGN).

This sequence belongs to the UPF0208 family.

It is found in the cell inner membrane. This is UPF0208 membrane protein VS_0999 from Vibrio atlanticus (strain LGP32) (Vibrio splendidus (strain Mel32)).